A 115-amino-acid chain; its full sequence is Double-headed protease inhibitor, submandibular gland (115 aa).

2 Kazal-like domains span residues 6 to 66 (IGRE…ACDI) and 67 to 115 (ECTE…HGEC). 6 cysteine pairs are disulfide-bonded: cysteine 12-cysteine 46, cysteine 24-cysteine 43, cysteine 32-cysteine 64, cysteine 68-cysteine 97, cysteine 75-cysteine 94, and cysteine 83-cysteine 115.

The protein resides in the secreted. In terms of biological role, this inhibitor is composed of two homologous actively inhibiting halves: one which inhibits trypsin, the other which inhibits elastase. The sequence is that of Double-headed protease inhibitor, submandibular gland from Canis lupus familiaris (Dog).